Here is a 411-residue protein sequence, read N- to C-terminus: Tyrosine--tRNA ligase (411 aa).

An L-tyrosine-binding site is contributed by Tyr-34. Residues 39–48 carry the 'HIGH' region motif; sequence CTATSLHIGS. Residues Tyr-171 and Gln-175 each contribute to the L-tyrosine site. The 'KMSKS' region motif lies at 231–235; the sequence is KMGKT. Lys-234 contacts ATP. The 67-residue stretch at 345-411 folds into the S4 RNA-binding domain; the sequence is ISAYKLFYNV…GKKRHILVKV (67 aa).

Belongs to the class-I aminoacyl-tRNA synthetase family. TyrS type 1 subfamily. Homodimer.

The protein localises to the cytoplasm. It catalyses the reaction tRNA(Tyr) + L-tyrosine + ATP = L-tyrosyl-tRNA(Tyr) + AMP + diphosphate + H(+). Its function is as follows. Catalyzes the attachment of tyrosine to tRNA(Tyr) in a two-step reaction: tyrosine is first activated by ATP to form Tyr-AMP and then transferred to the acceptor end of tRNA(Tyr). The polypeptide is Tyrosine--tRNA ligase (Rickettsia typhi (strain ATCC VR-144 / Wilmington)).